The following is a 149-amino-acid chain: Transcriptional repressor NrdR (149 aa).

The segment at 3-34 (CPFCSATDTKVIDSRLVAEGHQVRRRRECTEC) is a zinc-finger region. Residues 49 to 139 (PRVIKRDGTR…VYRAFEDVSE (91 aa)) form the ATP-cone domain.

The protein belongs to the NrdR family. Requires Zn(2+) as cofactor.

Functionally, negatively regulates transcription of bacterial ribonucleotide reductase nrd genes and operons by binding to NrdR-boxes. This is Transcriptional repressor NrdR from Shewanella sp. (strain MR-4).